Here is a 344-residue protein sequence, read N- to C-terminus: C-C chemokine receptor-like 2 (344 aa).

At 1-43 the chain is on the extracellular side; sequence MANYTLAPEDEYDVLIEGELESDEAEQCDKYDAQALSAQLVPS. N-linked (GlcNAc...) asparagine glycosylation occurs at Asn3. A helical membrane pass occupies residues 44–64; it reads LCSAVFVIGVLDNLLVVLILV. At 65–74 the chain is on the cytoplasmic side; that stretch reads KYKGLKRVEN. Residues 75–95 traverse the membrane as a helical segment; sequence IYLLNLAVSNLCFLLTLPFWA. The Extracellular portion of the chain corresponds to 96–104; that stretch reads HAGGDPMCK. A disulfide bridge connects residues Cys103 and Cys181. The chain crosses the membrane as a helical span at residues 105-125; sequence ILIGLYFVGLYSETFFNCLLT. Residues 126–144 are Cytoplasmic-facing; it reads VQRYLVFLHKGNFFSARRR. A helical membrane pass occupies residues 145-165; it reads VPCGIITSVLAWVTAILATLP. At 166-198 the chain is on the extracellular side; the sequence is EFVVYKPQMEDQKYKCAFSRTPFLPADETFWKH. Residues 199–219 traverse the membrane as a helical segment; that stretch reads FLTLKMNISVLVLPLFIFTFL. The Cytoplasmic portion of the chain corresponds to 220–238; that stretch reads YVQMRKTLRFREQRYSLFK. A helical transmembrane segment spans residues 239–259; it reads LVFAIMVVFLLMWAPYNIAFF. Over 260–286 the chain is Extracellular; that stretch reads LSTFKEHFSLSDCKSSYNLDKSVHITK. A helical membrane pass occupies residues 287–307; it reads LIATTHCCINPLLYAFLDGTF. At 308-344 the chain is on the cytoplasmic side; the sequence is SKYLCRCFHLRSNTPLQPRGQSAQGTSREEPDHSTEV. The span at 324 to 333 shows a compositional bias: polar residues; sequence QPRGQSAQGT. A disordered region spans residues 324-344; it reads QPRGQSAQGTSREEPDHSTEV. Residues 334-344 show a composition bias toward basic and acidic residues; the sequence is SREEPDHSTEV.

It belongs to the G-protein coupled receptor 1 family. In terms of tissue distribution, expressed abundantly in immunal tissues such as spleen, fetal liver, lymph node and bone marrow. Strong expression also in lung and heart. Expressed in almost all hematopoietic cells including monocytes, macrophages, PMNs, T-cells (both CD4+ and CD8+), monocyte-derived iDCs, NK cells, and CD34+ progenitor cells. B-cells expressed isoform 1 but not isoform 2. Up-regulated on synovial neutrophils of rheumatoid arthritis patients.

Its subcellular location is the cell membrane. Its function is as follows. Receptor for CCL19 and chemerin/RARRES2. Does not appear to be a signaling receptor, but may have a role in modulating chemokine-triggered immune responses by capturing and internalizing CCL19 or by presenting RARRES2 ligand to CMKLR1, a functional signaling receptors. Plays a critical role for the development of Th2 responses. In Homo sapiens (Human), this protein is C-C chemokine receptor-like 2 (CCRL2).